Reading from the N-terminus, the 500-residue chain is Ent-kaurene oxidase P450-4 (500 aa).

Residues 6–26 form a helical membrane-spanning segment; the sequence is VHWLIYVAFGAWLCSYVIHVL. A glycan (N-linked (GlcNAc...) asparagine) is linked at asparagine 240. Cysteine 441 is a heme binding site. Asparagine 475 carries N-linked (GlcNAc...) asparagine glycosylation.

This sequence belongs to the cytochrome P450 family. Requires heme as cofactor.

Its subcellular location is the membrane. The enzyme catalyses ent-kaur-16-ene + 3 reduced [NADPH--hemoprotein reductase] + 3 O2 = ent-kaur-16-en-19-oate + 3 oxidized [NADPH--hemoprotein reductase] + 4 H2O + 4 H(+). Its pathway is plant hormone biosynthesis; gibberellin biosynthesis. Its function is as follows. Ent-kaurene oxidase; part of the gene cluster that mediates the biosynthesis of gibberellins (GAs), diterpenoids that may provide a selective advantage during infection of the preferred host plant, rice. Gibberellins (GAs) are diterpenoids and are synthesized via the mevalonate pathway. Biosynthesis of the major metabolite GA3 (gibberellic acid) from geranylgeranyl diphosphate (GGPP) requires 13 steps. The GGPP produced by the geranylgeranyl diphosphate synthase GGS2 is converted to ent-kaurene via ent-copalyldiphosphate in a two-step cyclization reaction performed by the bifunctional ent-copalyl diphosphate synthase/ent-kaurene synthase enzyme (CPS/KS). Ent-Kaurene is metabolized to GAs by a series of oxidation reactions catalyzed by cytochrome P450 monooxygenases. Cytochrome P450 monooxygenase P450-4 is an ent-kaurene oxidase that catalyzes the three oxidation steps between ent-kaurene and ent-kaurenoic acid. The highly multifunctional cytochrome P450 monooxygenase P450-1 then catalyzes four steps involving oxidation at two carbon atoms, in the main pathway from ent-kaurenoic acid to GA14 via GA12-aldehyde as well as producing kaurenolides and fujenoic acids as by-products. The cytochrome P450 monooxygenase P450-2 then converts GA14 to GA4 by removal of C-20. GA4 is further converted to GA7 by the GA4 desaturase DES via 1,2-desaturation before cytochrome P450 monooxygenase P450-3, a 13-hydroxylase, hydroxylates GA7 to GA3, the final product of the GA-biosynthetic pathway. This Gibberella fujikuroi (strain CBS 195.34 / IMI 58289 / NRRL A-6831) (Bakanae and foot rot disease fungus) protein is Ent-kaurene oxidase P450-4.